Consider the following 123-residue polypeptide: Small ribosomal subunit protein uS12 (123 aa).

3-methylthioaspartic acid is present on Asp89.

It belongs to the universal ribosomal protein uS12 family. As to quaternary structure, part of the 30S ribosomal subunit. Contacts proteins S8 and S17. May interact with IF1 in the 30S initiation complex.

Its function is as follows. With S4 and S5 plays an important role in translational accuracy. In terms of biological role, interacts with and stabilizes bases of the 16S rRNA that are involved in tRNA selection in the A site and with the mRNA backbone. Located at the interface of the 30S and 50S subunits, it traverses the body of the 30S subunit contacting proteins on the other side and probably holding the rRNA structure together. The combined cluster of proteins S8, S12 and S17 appears to hold together the shoulder and platform of the 30S subunit. This Bifidobacterium animalis subsp. lactis (strain AD011) protein is Small ribosomal subunit protein uS12.